A 243-amino-acid polypeptide reads, in one-letter code: Probable sentrin-specific protease 8 (243 aa).

The protease stretch occupies residues 12–185 (SAIYQSDINI…LYVLSIIEEL (174 aa)). Residues His109 and Asp126 contribute to the active site. Catalysis depends on Cys174, which acts as the Nucleophile.

This sequence belongs to the peptidase C48 family.

Functionally, protease that catalyzes two essential functions in the nedd8 pathway: processing of full-length nedd8 to its mature form and deconjugation of nedd8 from targeted proteins. The chain is Probable sentrin-specific protease 8 (senp8) from Dictyostelium discoideum (Social amoeba).